The sequence spans 242 residues: Cysteine desulfuration protein SufE (242 aa).

Cysteine 148 (cysteine persulfide intermediate) is an active-site residue.

It belongs to the SufE family. In terms of assembly, monomer. Interacts with SufS; interaction enhances cysteine desulfurase activity of SufS.

It is found in the plastid. Its subcellular location is the apicoplast. Its pathway is cofactor biosynthesis; iron-sulfur cluster biosynthesis. Participates in sulfur mobilization (SUF) pathway for iron-sulfur (Fe-S) cluster biogenesis. Enhances cysteine desulfurase activity of SufS. Probably functions as a sulfur acceptor for SufS. This Plasmodium vivax protein is Cysteine desulfuration protein SufE.